Reading from the N-terminus, the 658-residue chain is Threonine--tRNA ligase (658 aa).

The TGS domain occupies 1–61 (MSDVRVIIQR…KDGEEVEPVQ (61 aa)). Positions 259-554 (DHRKLGNELD…LLEHYAGAFP (296 aa)) are catalytic. The Zn(2+) site is built by Cys-353, His-404, and His-531.

Belongs to the class-II aminoacyl-tRNA synthetase family. In terms of assembly, homodimer. Zn(2+) serves as cofactor.

It is found in the cytoplasm. The catalysed reaction is tRNA(Thr) + L-threonine + ATP = L-threonyl-tRNA(Thr) + AMP + diphosphate + H(+). Its function is as follows. Catalyzes the attachment of threonine to tRNA(Thr) in a two-step reaction: L-threonine is first activated by ATP to form Thr-AMP and then transferred to the acceptor end of tRNA(Thr). Also edits incorrectly charged L-seryl-tRNA(Thr). In Streptomyces avermitilis (strain ATCC 31267 / DSM 46492 / JCM 5070 / NBRC 14893 / NCIMB 12804 / NRRL 8165 / MA-4680), this protein is Threonine--tRNA ligase.